Consider the following 1274-residue polypeptide: Myosin-binding protein C, cardiac-type (1274 aa).

Residue Met-1 is modified to N-acetylmethionine. The region spanning 8-95 (PVSAFTKKPR…SKVKFDLKVT (88 aa)) is the Ig-like C2-type 1 domain. Ser-47 carries the post-translational modification Phosphoserine. Basic and acidic residues predominate over residues 95 to 104 (TEPAPPEKAE). The segment at 95 to 153 (TEPAPPEKAESAVAPTSMEAPETPKEVPALATQLEGNVSSPEGSVSVTQDGSVAGSQGA) is disordered. The residue at position 117 (Thr-117) is a Phosphothreonine. Polar residues predominate over residues 128 to 149 (LEGNVSSPEGSVSVTQDGSVAG). The Ig-like C2-type 2 domain occupies 157 to 259 (PIGLFLMRPQ…KFDSCNFNLT (103 aa)). Zn(2+) is bound by residues Gln-212, His-214, Glu-227, and His-229. A Phosphoserine modification is found at Ser-279. Thr-287 carries the phosphothreonine; by PKA and PKC modification. Ser-288 is subject to Phosphoserine. Position 307 is a phosphoserine; by PKA (Ser-307). Phosphoserine occurs at positions 312 and 427. Ig-like C2-type domains are found at residues 361–452 (KKST…VKEP) and 452–546 (PPVL…KKLE). Cys-436 and Cys-443 are joined by a disulfide. Ser-459 and Ser-550 each carry phosphoserine. Thr-607 carries the post-translational modification Phosphothreonine. The region spanning 645–765 (PKIHLDCPGS…PVGEDQVNLT (121 aa)) is the Ig-like C2-type 5 domain. Fibronectin type-III domains follow at residues 774–870 (APAA…IGPP) and 872–967 (EPTH…VQEI). The Ig-like C2-type 6 domain maps to 971-1059 (PRLQLPRHLR…ENMEDKATLV (89 aa)). Positions 1068-1163 (PPLDIRVVET…TKEPIFIPRP (96 aa)) constitute a Fibronectin type-III 3 domain. Positions 1181–1269 (PSFTQPLTNR…GEAQCECRLE (89 aa)) constitute an Ig-like C2-type 7 domain. The residue at position 1241 (Arg-1241) is an Omega-N-methylarginine.

Belongs to the immunoglobulin superfamily. MyBP family. In terms of processing, substrate for phosphorylation by PKA and PKC. Reversible phosphorylation appears to modulate contraction. Post-translationally, polyubiquitinated.

Its function is as follows. Thick filament-associated protein located in the crossbridge region of vertebrate striated muscle a bands. In vitro it binds MHC, F-actin and native thin filaments, and modifies the activity of actin-activated myosin ATPase. It may modulate muscle contraction or may play a more structural role. This is Myosin-binding protein C, cardiac-type (Mybpc3) from Rattus norvegicus (Rat).